The primary structure comprises 284 residues: 2,3,4,5-tetrahydropyridine-2,6-dicarboxylate N-succinyltransferase (284 aa).

This sequence belongs to the transferase hexapeptide repeat family.

Its subcellular location is the cytoplasm. It carries out the reaction (S)-2,3,4,5-tetrahydrodipicolinate + succinyl-CoA + H2O = (S)-2-succinylamino-6-oxoheptanedioate + CoA. It functions in the pathway amino-acid biosynthesis; L-lysine biosynthesis via DAP pathway; LL-2,6-diaminopimelate from (S)-tetrahydrodipicolinate (succinylase route): step 1/3. The chain is 2,3,4,5-tetrahydropyridine-2,6-dicarboxylate N-succinyltransferase from Brucella abortus (strain S19).